A 154-amino-acid polypeptide reads, in one-letter code: Myoglobin (154 aa).

The Globin domain occupies 2–148 (GLSDGEWQLV…FRNDMAAQYK (147 aa)). Ser4 carries the post-translational modification Phosphoserine. Nitrite is bound at residue His65. His65 contacts O2. Phosphothreonine is present on Thr68. His94 contacts heme b.

In terms of assembly, monomer.

The protein resides in the cytoplasm. The protein localises to the sarcoplasm. It catalyses the reaction Fe(III)-heme b-[protein] + nitric oxide + H2O = Fe(II)-heme b-[protein] + nitrite + 2 H(+). It carries out the reaction H2O2 + AH2 = A + 2 H2O. Functionally, monomeric heme protein which primary function is to store oxygen and facilitate its diffusion within muscle tissues. Reversibly binds oxygen through a pentacoordinated heme iron and enables its timely and efficient release as needed during periods of heightened demand. Depending on the oxidative conditions of tissues and cells, and in addition to its ability to bind oxygen, it also has a nitrite reductase activity whereby it regulates the production of bioactive nitric oxide. Under stress conditions, like hypoxia and anoxia, it also protects cells against reactive oxygen species thanks to its pseudoperoxidase activity. The sequence is that of Myoglobin from Rangifer tarandus (Reindeer).